Consider the following 792-residue polypeptide: Receptor-like protein 54 (792 aa).

The N-terminal stretch at 1 to 21 is a signal peptide; it reads MKSNLAVFFITCFFCCVFVTS. Over 22 to 758 the chain is Extracellular; the sequence is DSVYTLPFPF…PKQEHALNWK (737 aa). N-linked (GlcNAc...) asparagine glycosylation is found at N68 and N107. 12 LRR repeats span residues 114–137, 139–162, 163–187, 189–209, 211–233, 235–258, 259–282, 283–302, 303–324, 325–349, 351–374, and 375–399; these read QHLRYLDLSENHFDSSPIPSGFGR, TYLESLDLSKNGFIGEVPSSISNL, SRLTNLDLSYNKLTGGIPNLHSLTL, ENIDLSYNKFSGAIPSYLFTM, FLVSLNLRQNHLSDPLENINYSA, SKLLILDMAYNLMSHRILEPISKL, ANLIQIDLSFQKTPYTFNFDFLLF, KSLVRLDLSGNSVSVVGTGS, ENLTHLDLSSCNITEFPMFIKD, LQRLWWLDISNNRIKGKVPELLWTL, SMLHVNLSRNSFDSLEGTPKIILN, and SSISELDLSSNAFKGSFPIIPPYVN. The N-linked (GlcNAc...) asparagine glycan is linked to N161. N230 carries N-linked (GlcNAc...) asparagine glycosylation. 2 N-linked (GlcNAc...) asparagine glycosylation sites follow: N304 and N314. 2 N-linked (GlcNAc...) asparagine glycosylation sites follow: N356 and N374. One copy of the LRR 13; degenerate repeat lies at 400 to 418; it reads IMAASNNYFTGGIPLIFCK. LRR repeat units lie at residues 419-443, 444-470, 472-489, and 490-515; these read RYRLSLLDLSNNNFSGTIPRCLTNV, SLGLEALKLSNNSLTGRLPDIEDRLVL, DVGHNQISGKLPRSLVNC, and TTLKFLNVEGNHINDTFPFWLKALTR. N431, N442, N454, N488, and N503 each carry an N-linked (GlcNAc...) asparagine glycan. One copy of the LRR 18; degenerate repeat lies at 516–536; the sequence is LEIIVLRSNRFHGPISSPEVS. LRR repeat units lie at residues 539 to 563, 614 to 637, 638 to 661, 662 to 685, and 687 to 709; these read FTALRIIDISRNSFNGSLPQNYFAN, DTYTSIDFSGNSFEGQIPESIGDL, KSLIVLDLSNNSFTGRIPSSLAKL, KQLESLDLSQNRISGNIPQELREL, and FLGYVNMSHNRLTGQIPQSTQVG. N-linked (GlcNAc...) asparagine glycosylation is found at N553 and N563. N-linked (GlcNAc...) asparagine glycosylation is present at N647. The N-linked (GlcNAc...) asparagine glycan is linked to N692. The chain crosses the membrane as a helical span at residues 759–779; it reads AAAIGYGPGVLFGLAIGQAFA. Residues 780 to 792 are Cytoplasmic-facing; the sequence is RYKPVLFYKLFRL.

This sequence belongs to the RLP family.

Its subcellular location is the cell membrane. The chain is Receptor-like protein 54 from Arabidopsis thaliana (Mouse-ear cress).